The following is a 317-amino-acid chain: Beta-ketoacyl-[acyl-carrier-protein] synthase III (317 aa).

Active-site residues include cysteine 112 and histidine 244. The ACP-binding stretch occupies residues 245–249 (QANIR). Residue asparagine 274 is part of the active site.

Belongs to the thiolase-like superfamily. FabH family. In terms of assembly, homodimer.

The protein localises to the cytoplasm. The catalysed reaction is malonyl-[ACP] + acetyl-CoA + H(+) = 3-oxobutanoyl-[ACP] + CO2 + CoA. Its pathway is lipid metabolism; fatty acid biosynthesis. Its function is as follows. Catalyzes the condensation reaction of fatty acid synthesis by the addition to an acyl acceptor of two carbons from malonyl-ACP. Catalyzes the first condensation reaction which initiates fatty acid synthesis and may therefore play a role in governing the total rate of fatty acid production. Possesses both acetoacetyl-ACP synthase and acetyl transacylase activities. Its substrate specificity determines the biosynthesis of branched-chain and/or straight-chain of fatty acids. This chain is Beta-ketoacyl-[acyl-carrier-protein] synthase III, found in Rickettsia prowazekii (strain Madrid E).